Here is a 483-residue protein sequence, read N- to C-terminus: Aspartyl/glutamyl-tRNA(Asn/Gln) amidotransferase subunit B (483 aa).

The protein belongs to the GatB/GatE family. GatB subfamily. Heterotrimer of A, B and C subunits.

The enzyme catalyses L-glutamyl-tRNA(Gln) + L-glutamine + ATP + H2O = L-glutaminyl-tRNA(Gln) + L-glutamate + ADP + phosphate + H(+). The catalysed reaction is L-aspartyl-tRNA(Asn) + L-glutamine + ATP + H2O = L-asparaginyl-tRNA(Asn) + L-glutamate + ADP + phosphate + 2 H(+). Allows the formation of correctly charged Asn-tRNA(Asn) or Gln-tRNA(Gln) through the transamidation of misacylated Asp-tRNA(Asn) or Glu-tRNA(Gln) in organisms which lack either or both of asparaginyl-tRNA or glutaminyl-tRNA synthetases. The reaction takes place in the presence of glutamine and ATP through an activated phospho-Asp-tRNA(Asn) or phospho-Glu-tRNA(Gln). The protein is Aspartyl/glutamyl-tRNA(Asn/Gln) amidotransferase subunit B of Herpetosiphon aurantiacus (strain ATCC 23779 / DSM 785 / 114-95).